The primary structure comprises 40 residues: Thioredoxin (40 aa).

C29 and C32 are oxidised to a cystine.

It belongs to the thioredoxin family.

In terms of biological role, participates in various redox reactions through the reversible oxidation of its active center dithiol to a disulfide and catalyzes dithiol-disulfide exchange reactions. The polypeptide is Thioredoxin (trxA) (Clostridium sporogenes).